The chain runs to 622 residues: Glutamyl-tRNA(Gln) amidotransferase subunit B, mitochondrial (622 aa).

A mitochondrion-targeting transit peptide spans 1–54 (MSRIPTRELGRYLLQGQICQRGCVASSVSKSRAKQLGRHPLLPHDRHQPTQARH). The segment at 30 to 67 (KSRAKQLGRHPLLPHDRHQPTQARHAHTVTTTATPTQL) is disordered. Low complexity predominate over residues 57–67 (TVTTTATPTQL).

It belongs to the GatB/GatE family. GatB subfamily. In terms of assembly, subunit of the heterotrimeric GatCAB amidotransferase (AdT) complex, composed of A, B and C subunits.

The protein localises to the mitochondrion. The enzyme catalyses L-glutamyl-tRNA(Gln) + L-glutamine + ATP + H2O = L-glutaminyl-tRNA(Gln) + L-glutamate + ADP + phosphate + H(+). Functionally, allows the formation of correctly charged Gln-tRNA(Gln) through the transamidation of misacylated Glu-tRNA(Gln) in the mitochondria. The reaction takes place in the presence of glutamine and ATP through an activated gamma-phospho-Glu-tRNA(Gln). This is Glutamyl-tRNA(Gln) amidotransferase subunit B, mitochondrial from Verticillium alfalfae (strain VaMs.102 / ATCC MYA-4576 / FGSC 10136) (Verticillium wilt of alfalfa).